The chain runs to 396 residues: Tryptophan synthase beta chain (396 aa).

Lys86 bears the N6-(pyridoxal phosphate)lysine mark.

This sequence belongs to the TrpB family. In terms of assembly, tetramer of two alpha and two beta chains. Pyridoxal 5'-phosphate is required as a cofactor.

It carries out the reaction (1S,2R)-1-C-(indol-3-yl)glycerol 3-phosphate + L-serine = D-glyceraldehyde 3-phosphate + L-tryptophan + H2O. The protein operates within amino-acid biosynthesis; L-tryptophan biosynthesis; L-tryptophan from chorismate: step 5/5. Its function is as follows. The beta subunit is responsible for the synthesis of L-tryptophan from indole and L-serine. The chain is Tryptophan synthase beta chain from Francisella tularensis subsp. tularensis (strain FSC 198).